Reading from the N-terminus, the 244-residue chain is Phosphoadenosine 5'-phosphosulfate reductase (244 aa).

C239 serves as the catalytic Nucleophile; cysteine thiosulfonate intermediate.

It belongs to the PAPS reductase family. CysH subfamily.

The protein resides in the cytoplasm. It catalyses the reaction [thioredoxin]-disulfide + sulfite + adenosine 3',5'-bisphosphate + 2 H(+) = [thioredoxin]-dithiol + 3'-phosphoadenylyl sulfate. The protein operates within sulfur metabolism; hydrogen sulfide biosynthesis; sulfite from sulfate: step 3/3. Its function is as follows. Catalyzes the formation of sulfite from phosphoadenosine 5'-phosphosulfate (PAPS) using thioredoxin as an electron donor. This Shigella flexneri serotype 5b (strain 8401) protein is Phosphoadenosine 5'-phosphosulfate reductase.